The following is a 383-amino-acid chain: D-aspartate oxidase 3 (383 aa).

Residues 1–17 (MLYALLLLFGGVSTVSS) form the signal peptide. Residues Lys56 and Ser63 each contribute to the FAD site. Asn152, Asn271, and Asn320 each carry an N-linked (GlcNAc...) asparagine glycan. An FAD-binding site is contributed by Thr339. Asn371 carries an N-linked (GlcNAc...) asparagine glycan.

Belongs to the DAMOX/DASOX family. The cofactor is FAD. As to expression, in both sexes, present in coelomocytes (at protein level). Expressed in hypodermal cells and the proximal gonadal sheath cells in adult hermaphrodites (at protein level). Also expressed in probable head mesodermal cells and unidentified cells in the head, and vulval muscles in adult hermaphrodites. Expressed in the seminal vesicle, spicule and tail cells in adult males (at protein level).

The protein localises to the secreted. The enzyme catalyses D-aspartate + O2 + H2O = oxaloacetate + H2O2 + NH4(+). The catalysed reaction is D-glutamate + O2 + H2O = H2O2 + 2-oxoglutarate + NH4(+). Selectively catalyzes the oxidative deamination of acidic amino acids. Plays a role in the egg-laying events and maturation processes of the reproductive organs. The sequence is that of D-aspartate oxidase 3 (ddo-3) from Caenorhabditis elegans.